Here is a 184-residue protein sequence, read N- to C-terminus: Probable chemoreceptor glutamine deamidase CheD (184 aa).

The protein belongs to the CheD family.

The catalysed reaction is L-glutaminyl-[protein] + H2O = L-glutamyl-[protein] + NH4(+). Functionally, probably deamidates glutamine residues to glutamate on methyl-accepting chemotaxis receptors (MCPs), playing an important role in chemotaxis. The sequence is that of Probable chemoreceptor glutamine deamidase CheD from Rhizobium leguminosarum bv. trifolii (strain WSM2304).